We begin with the raw amino-acid sequence, 3746 residues long: N-(5-amino-5-carboxypentanoyl)-L-cysteinyl-D-valine synthase (3746 aa).

The segment at Glu299–Arg711 is adenylation (A) domain 1. A Carrier 1 domain is found at Asp818–Gln895. Ser855 carries the post-translational modification O-(pantetheine 4'-phosphoryl)serine. The condensation (C) domain 1 stretch occupies residues Asn918–Leu1372. The interval Phe1391–Arg1801 is adenylation (A) domain 2. In terms of domain architecture, Carrier 2 spans Pro1902 to Ala1979. O-(pantetheine 4'-phosphoryl)serine is present on Ser1939. Residues Gln1994–Glu2434 form a condensation (C) domain 2 region. The tract at residues Ala2478–Arg2883 is adenylation (A) domain 3. In terms of domain architecture, Carrier 3 spans Pro2991–Asp3066. Ser3026 carries the O-(pantetheine 4'-phosphoryl)serine modification. Residues Gly3084 to Gln3500 form an epimerase (E) domain region. Residues Thr3530 to Val3732 are thioesterase (TE) domain.

This sequence belongs to the NRP synthetase family. Pantetheine 4'-phosphate is required as a cofactor. Requires Mg(2+) as cofactor.

It is found in the cytoplasm. The protein localises to the cytosol. It localises to the vacuole membrane. The enzyme catalyses L-2-aminoadipate + L-valine + L-cysteine + 3 ATP + H2O = N-[(5S)-5-amino-5-carboxypentanoyl]-L-cysteinyl-D-valine + 3 AMP + 3 diphosphate + 3 H(+). The protein operates within antibiotic biosynthesis; penicillin G biosynthesis; penicillin G from L-alpha-aminoadipate and L-cysteine and L-valine: step 1/3. Its function is as follows. Nonribosomal peptide synthetase; part of the gene cluster that mediates the biosynthesis of penicillin, the world's most important antibiotic. The trimodular NRPS acvA produces the tripeptide N-[(5S)-5-amino-5-carboxypentanoyl]-L-cysteinyl-D-valine (LLD-ACV or ACV) via condensation of the 3 residues L-2-aminoadipate, L-cysteine and L-valine. The precursor amino acids for penicillin biosynthesis are withdrawn from the vacuolar amino acid pool by the MFS-type transporter penV. Each of the constituent amino acids of the tripeptide ACV are activated as aminoacyl-adenylates with peptide bonds formed through the participation of amino acid thioester intermediates. The penicillin biosynthesis occurs via 3 enzymatic steps, the first corresponding to the production of the tripeptide N-[(5S)-5-amino-5-carboxypentanoyl]-L-cysteinyl-D-valine (LLD-ACV or ACV) by the NRPS acvA. The tripeptide ACV is then cyclized to isopenicillin N (IPN) by the isopenicillin N synthase ipnA that forms the beta-lactam nucleus. Finally, the alpha-aminoadipyl side chain is exchanged for phenylacetic acid by the isopenicillin N acyltransferase aatA to yield penicillin in the peroxisomal matrix. The protein is N-(5-amino-5-carboxypentanoyl)-L-cysteinyl-D-valine synthase of Penicillium chrysogenum (Penicillium notatum).